The chain runs to 475 residues: Protein transport protein Sec61 subunit alpha (475 aa).

Residues methionine 1–valine 32 lie on the Cytoplasmic side of the membrane. The chain crosses the membrane as a helical span at residues leucine 33 to isoleucine 53. The Lumenal portion of the chain corresponds to arginine 54 to threonine 75. The helical transmembrane segment at leucine 76–glycine 96 threads the bilayer. Residues alanine 97–lysine 118 are Cytoplasmic-facing. The chain crosses the membrane as a helical span at residues leucine 119–glycine 139. Topologically, residues aspartate 140–glycine 145 are lumenal. The helical transmembrane segment at phenylalanine 146–leucine 166 threads the bilayer. The Cytoplasmic portion of the chain corresponds to aspartate 167–glycine 173. A helical transmembrane segment spans residues tyrosine 174–tryptophan 194. The Lumenal portion of the chain corresponds to lysine 195–proline 241. The helical transmembrane segment at asparagine 242–phenylalanine 262 threads the bilayer. Residues arginine 263–asparagine 289 lie on the Cytoplasmic side of the membrane. A helical transmembrane segment spans residues isoleucine 290–tyrosine 310. Over arginine 311 to valine 353 the chain is Lumenal. Residues leucine 354 to phenylalanine 374 form a helical membrane-spanning segment. Topologically, residues serine 375 to glutamate 411 are cytoplasmic. A helical membrane pass occupies residues leucine 412–alanine 434. The Lumenal portion of the chain corresponds to aspartate 435–isoleucine 440. Residues glycine 441–valine 461 traverse the membrane as a helical segment. Residues lysine 462 to phenylalanine 475 lie on the Cytoplasmic side of the membrane.

It belongs to the SecY/SEC61-alpha family. As to quaternary structure, heterotrimeric complex composed of SEC61-alpha, SEC61-beta and SEC61-gamma.

The protein localises to the endoplasmic reticulum membrane. Functionally, appears to play a crucial role in the insertion of secretory and membrane polypeptides into the ER. It is required for assembly of membrane and secretory proteins. Found to be tightly associated with membrane-bound ribosomes, either directly or through adaptor proteins. This is Protein transport protein Sec61 subunit alpha (sec61a) from Dictyostelium discoideum (Social amoeba).